Reading from the N-terminus, the 268-residue chain is Undecaprenyl-diphosphatase (268 aa).

A run of 8 helical transmembrane segments spans residues 4 to 24 (STTL…FIPV), 50 to 70 (IQLG…VSVI), 84 to 104 (VAVL…HGFI), 109 to 129 (FETP…LLFV), 144 to 164 (LPLN…VPGV), 185 to 205 (AEFS…FDLF), 214 to 234 (SALG…VLVV), and 247 to 267 (ALFG…LLAG).

This sequence belongs to the UppP family.

The protein resides in the cell inner membrane. The catalysed reaction is di-trans,octa-cis-undecaprenyl diphosphate + H2O = di-trans,octa-cis-undecaprenyl phosphate + phosphate + H(+). Functionally, catalyzes the dephosphorylation of undecaprenyl diphosphate (UPP). Confers resistance to bacitracin. The protein is Undecaprenyl-diphosphatase of Cereibacter sphaeroides (strain ATCC 17029 / ATH 2.4.9) (Rhodobacter sphaeroides).